We begin with the raw amino-acid sequence, 327 residues long: Malate dehydrogenase 1 (327 aa).

12 to 18 (GAAGQIA) provides a ligand contact to NAD(+). The substrate site is built by arginine 93 and arginine 99. NAD(+) is bound by residues asparagine 106, glutamine 113, and 130-132 (VGN). Asparagine 132 and arginine 163 together coordinate substrate. Residue histidine 188 is the Proton acceptor of the active site.

Belongs to the LDH/MDH superfamily. MDH type 2 family.

It carries out the reaction (S)-malate + NAD(+) = oxaloacetate + NADH + H(+). In terms of biological role, catalyzes the reversible oxidation of malate to oxaloacetate. In Burkholderia thailandensis (strain ATCC 700388 / DSM 13276 / CCUG 48851 / CIP 106301 / E264), this protein is Malate dehydrogenase 1.